The following is a 395-amino-acid chain: Elongation factor Tu (395 aa).

The 195-residue stretch at 10–204 folds into the tr-type G domain; the sequence is KPHVNIGTIG…EVDAYIPTPE (195 aa). The tract at residues 19-26 is G1; sequence GHVDHGKT. Residue 19–26 participates in GTP binding; it reads GHVDHGKT. Position 26 (Thr26) interacts with Mg(2+). The segment at 60–64 is G2; it reads GITIS. Residues 81–84 are G3; it reads DCPG. GTP contacts are provided by residues 81-85 and 136-139; these read DCPGH and NKCD. The G4 stretch occupies residues 136–139; the sequence is NKCD. The segment at 174 to 176 is G5; it reads SAL.

Belongs to the TRAFAC class translation factor GTPase superfamily. Classic translation factor GTPase family. EF-Tu/EF-1A subfamily. As to quaternary structure, monomer.

Its subcellular location is the cytoplasm. It catalyses the reaction GTP + H2O = GDP + phosphate + H(+). Its function is as follows. GTP hydrolase that promotes the GTP-dependent binding of aminoacyl-tRNA to the A-site of ribosomes during protein biosynthesis. In Bacillus anthracis (strain A0248), this protein is Elongation factor Tu.